The sequence spans 361 residues: MEEYYMKLALDLAKQGEGQTESNPLVGAVVVKDGQIVGMGAHLKYGEAHAEVHAIHMAGAHAEGADIYVTLEPCSHYGKTPPCAELIINSGIKRVFVAMRDPNPLVAGRGISMMKEAGIEVREGILADQAERLNEKFLHFMRTGLPYVTLKAAASLDGKIATSTGDSKWITSEAARQDAQQYRKTHQSILVGVGTVKADNPSLTCRLPNVTKQPVRVILDTVLSIPEDAKVICDQIAPTWIFTTARADEEKKKRLSAFGVNIFTLETERIQIPDVLKILAEEGIMSVYVEGGSAVHGSFVKEGCFQEIIFYFAPKLIGGTHAPSLISGEGFQSMKDVPLLQFTDITQIGRDIKLTAKPTKE.

Positions 1–122 constitute a CMP/dCMP-type deaminase domain; it reads MEEYYMKLAL…MMKEAGIEVR (122 aa). Residues 1 to 144 form a deaminase region; it reads MEEYYMKLAL…EKFLHFMRTG (144 aa). Histidine 49 lines the Zn(2+) pocket. Glutamate 51 functions as the Proton donor in the catalytic mechanism. Zn(2+) contacts are provided by cysteine 74 and cysteine 83. The reductase stretch occupies residues 145-361; it reads LPYVTLKAAA…IKLTAKPTKE (217 aa). Alanine 153 provides a ligand contact to NADP(+). Residue serine 167 coordinates substrate. Tryptophan 169 is an NADP(+) binding site. Residue arginine 183 coordinates substrate. The NADP(+) site is built by threonine 195 and aspartate 199. The substrate site is built by leucine 203 and arginine 206. Threonine 221 lines the NADP(+) pocket. Glutamate 290 contributes to the substrate binding site. 292-298 is a binding site for NADP(+); that stretch reads GSAVHGS.

This sequence in the N-terminal section; belongs to the cytidine and deoxycytidylate deaminase family. In the C-terminal section; belongs to the HTP reductase family. As to quaternary structure, homotetramer. Zn(2+) is required as a cofactor.

It carries out the reaction 2,5-diamino-6-hydroxy-4-(5-phosphoribosylamino)-pyrimidine + H2O + H(+) = 5-amino-6-(5-phospho-D-ribosylamino)uracil + NH4(+). The catalysed reaction is 5-amino-6-(5-phospho-D-ribitylamino)uracil + NADP(+) = 5-amino-6-(5-phospho-D-ribosylamino)uracil + NADPH + H(+). It participates in cofactor biosynthesis; riboflavin biosynthesis; 5-amino-6-(D-ribitylamino)uracil from GTP: step 2/4. Its pathway is cofactor biosynthesis; riboflavin biosynthesis; 5-amino-6-(D-ribitylamino)uracil from GTP: step 3/4. Converts 2,5-diamino-6-(ribosylamino)-4(3h)-pyrimidinone 5'-phosphate into 5-amino-6-(ribosylamino)-2,4(1h,3h)-pyrimidinedione 5'-phosphate. The sequence is that of Riboflavin biosynthesis protein RibD (ribD) from Bacillus subtilis (strain 168).